Here is a 1025-residue protein sequence, read N- to C-terminus: Beta-galactosidase (1025 aa).

Substrate-binding residues include Asn103 and Asp202. Asp202 contacts Na(+). Mg(2+)-binding residues include Glu417, His419, and Glu462. Residues Glu462 and 538–541 (EYAH) each bind substrate. Glu462 functions as the Proton donor in the catalytic mechanism. The active-site Nucleophile is the Glu538. Asn598 provides a ligand contact to Mg(2+). Residues Phe602 and Asn605 each coordinate Na(+). Asn605 and Trp1003 together coordinate substrate.

It belongs to the glycosyl hydrolase 2 family. In terms of assembly, homotetramer. Mg(2+) serves as cofactor. The cofactor is Na(+).

It carries out the reaction Hydrolysis of terminal non-reducing beta-D-galactose residues in beta-D-galactosides.. This is Beta-galactosidase from Citrobacter koseri (strain ATCC BAA-895 / CDC 4225-83 / SGSC4696).